The following is an 83-amino-acid chain: Hainantoxin-III 6 (83 aa).

The first 21 residues, 1–21 (MKASMFLALAGLVLLFVVGYA), serve as a signal peptide directing secretion. The propeptide occupies 22–48 (SESEEKESPRELLSKIFAVDDFKGEER). Intrachain disulfides connect C50–C65, C57–C70, and C64–C77. L81 carries the post-translational modification Leucine amide.

This sequence belongs to the neurotoxin 10 (Hwtx-1) family. 15 (Hntx-3) subfamily. As to quaternary structure, monomer. As to expression, expressed by the venom gland.

It is found in the secreted. In terms of biological role, selective antagonist of neuronal tetrodotoxin (TTX)-sensitive voltage-gated sodium channels (IC(50)=1270 nM on Nav1.1/SCN1A, 270 nM on Nav1.2/SCN2A, 491 nM on Nav1.3/SCN3A and 232 nM on Nav1.7/SCN9A). This toxin suppress Nav1.7 current amplitude without significantly altering the activation, inactivation, and repriming kinetics. Short extreme depolarizations partially activate the toxin-bound channel, indicating voltage-dependent inhibition of this toxin. This toxin increases the deactivation of the Nav1.7 current after extreme depolarizations. The toxin-Nav1.7 complex is gradually dissociated upon prolonged strong depolarizations in a voltage-dependent manner, and the unbound toxin rebinds to Nav1.7 after a long repolarization. Moreover, analysis of chimeric channels showed that the DIIS3-S4 linker is critical for toxin binding to Nav1.7. These data are consistent with this toxin interacting with Nav1.7 site 4 and trapping the domain II voltage sensor in the closed state. The protein is Hainantoxin-III 6 of Cyriopagopus hainanus (Chinese bird spider).